A 712-amino-acid polypeptide reads, in one-letter code: Ribosomal RNA large subunit methyltransferase K/L (712 aa).

The 112-residue stretch at 42 to 153 (QALRIVMWSR…KGRASLSIDL (112 aa)) folds into the THUMP domain.

Belongs to the methyltransferase superfamily. RlmKL family.

The protein localises to the cytoplasm. It catalyses the reaction guanosine(2445) in 23S rRNA + S-adenosyl-L-methionine = N(2)-methylguanosine(2445) in 23S rRNA + S-adenosyl-L-homocysteine + H(+). It carries out the reaction guanosine(2069) in 23S rRNA + S-adenosyl-L-methionine = N(2)-methylguanosine(2069) in 23S rRNA + S-adenosyl-L-homocysteine + H(+). Specifically methylates the guanine in position 2445 (m2G2445) and the guanine in position 2069 (m7G2069) of 23S rRNA. This chain is Ribosomal RNA large subunit methyltransferase K/L, found in Stenotrophomonas maltophilia (strain R551-3).